We begin with the raw amino-acid sequence, 242 residues long: 1-(5-phosphoribosyl)-5-[(5-phosphoribosylamino)methylideneamino] imidazole-4-carboxamide isomerase (242 aa).

Asp8 acts as the Proton acceptor in catalysis. Residue Asp129 is the Proton donor of the active site.

The protein belongs to the HisA/HisF family.

Its subcellular location is the cytoplasm. It carries out the reaction 1-(5-phospho-beta-D-ribosyl)-5-[(5-phospho-beta-D-ribosylamino)methylideneamino]imidazole-4-carboxamide = 5-[(5-phospho-1-deoxy-D-ribulos-1-ylimino)methylamino]-1-(5-phospho-beta-D-ribosyl)imidazole-4-carboxamide. The protein operates within amino-acid biosynthesis; L-histidine biosynthesis; L-histidine from 5-phospho-alpha-D-ribose 1-diphosphate: step 4/9. In Erythrobacter litoralis (strain HTCC2594), this protein is 1-(5-phosphoribosyl)-5-[(5-phosphoribosylamino)methylideneamino] imidazole-4-carboxamide isomerase.